The primary structure comprises 520 residues: Sensory neuron membrane protein 2 (520 aa).

The Cytoplasmic portion of the chain corresponds to 1–7 (MLGKHSK). A helical transmembrane segment spans residues 8-28 (IFFGVSLIFLVIAIVLASWGF). The Extracellular portion of the chain corresponds to 29–468 (QKIVNKQIQK…DSHKLLGYVE (440 aa)). Asparagine 44, asparagine 67, asparagine 104, asparagine 228, asparagine 271, asparagine 313, and asparagine 342 each carry an N-linked (GlcNAc...) asparagine glycan. 3 disulfide bridges follow: cysteine 267/cysteine 337, cysteine 298/cysteine 361, and cysteine 339/cysteine 350. The chain crosses the membrane as a helical span at residues 469-489 (VAKWFLLTIAIISVIASAVAV). Over 490–520 (ARANALLSWPRNSNSVSFILGPSVTQVNKGN) the chain is Cytoplasmic.

This sequence belongs to the CD36 family. Localizes to cells surrounding the sensory neurons in the antenna. Associate in a ratio of 2:1 with the neurons expressing the other subtype SNMP1.

It is found in the cell membrane. Functionally, plays an olfactory role that is not restricted to pheromone sensitivity. May play a role in the elimination of lipophilic components from the sensillum lymph. In Heliothis virescens (Tobacco budworm moth), this protein is Sensory neuron membrane protein 2.